The chain runs to 179 residues: UPF0303 protein YBR137W (179 aa).

The protein belongs to the UPF0303 family.

The protein resides in the cytoplasm. This is UPF0303 protein YBR137W from Saccharomyces cerevisiae (strain ATCC 204508 / S288c) (Baker's yeast).